The following is a 155-amino-acid chain: SsrA-binding protein (155 aa).

The protein belongs to the SmpB family.

It localises to the cytoplasm. In terms of biological role, required for rescue of stalled ribosomes mediated by trans-translation. Binds to transfer-messenger RNA (tmRNA), required for stable association of tmRNA with ribosomes. tmRNA and SmpB together mimic tRNA shape, replacing the anticodon stem-loop with SmpB. tmRNA is encoded by the ssrA gene; the 2 termini fold to resemble tRNA(Ala) and it encodes a 'tag peptide', a short internal open reading frame. During trans-translation Ala-aminoacylated tmRNA acts like a tRNA, entering the A-site of stalled ribosomes, displacing the stalled mRNA. The ribosome then switches to translate the ORF on the tmRNA; the nascent peptide is terminated with the 'tag peptide' encoded by the tmRNA and targeted for degradation. The ribosome is freed to recommence translation, which seems to be the essential function of trans-translation. The polypeptide is SsrA-binding protein (Streptococcus suis (strain 98HAH33)).